The primary structure comprises 272 residues: 3-methyl-2-oxobutanoate hydroxymethyltransferase (272 aa).

Positions 54 and 93 each coordinate Mg(2+). 3-methyl-2-oxobutanoate-binding positions include Asp54–Ser55, Asp93, and Lys121. Glu123 provides a ligand contact to Mg(2+). Glu190 functions as the Proton acceptor in the catalytic mechanism.

The protein belongs to the PanB family. In terms of assembly, homodecamer; pentamer of dimers. The cofactor is Mg(2+).

It is found in the cytoplasm. It carries out the reaction 3-methyl-2-oxobutanoate + (6R)-5,10-methylene-5,6,7,8-tetrahydrofolate + H2O = 2-dehydropantoate + (6S)-5,6,7,8-tetrahydrofolate. Its pathway is cofactor biosynthesis; (R)-pantothenate biosynthesis; (R)-pantoate from 3-methyl-2-oxobutanoate: step 1/2. Catalyzes the reversible reaction in which hydroxymethyl group from 5,10-methylenetetrahydrofolate is transferred onto alpha-ketoisovalerate to form ketopantoate. The protein is 3-methyl-2-oxobutanoate hydroxymethyltransferase of Janthinobacterium sp. (strain Marseille) (Minibacterium massiliensis).